We begin with the raw amino-acid sequence, 82 residues long: Translational regulator CsrA (82 aa).

The protein belongs to the CsrA/RsmA family. As to quaternary structure, homodimer; the beta-strands of each monomer intercalate to form a hydrophobic core while the alpha-helices form wings that extend away from the core. Each of the alpha-helical wings interacts with an FliW monomer, yielding a FliW-CsrA(2)-FliW complex.

Its subcellular location is the cytoplasm. Its function is as follows. A translational regulator that binds mRNA to regulate translation initiation and/or mRNA stability. Usually binds in the 5'-UTR at or near the Shine-Dalgarno sequence preventing ribosome-binding, thus repressing translation. Its main target seems to be the major flagellin gene, while its function is anatagonized by FliW. The polypeptide is Translational regulator CsrA (Geobacillus thermodenitrificans (strain NG80-2)).